We begin with the raw amino-acid sequence, 547 residues long: Chaperonin GroEL 2 (547 aa).

Residues 30-33 (TLGP), Lys-51, 87-91 (DGTTT), Gly-415, 479-481 (NAA), and Asp-495 contribute to the ATP site. A disordered region spans residues 525-547 (PKEESAAPAGGGMGGMGGMGGMM). The segment covering 533-547 (AGGGMGGMGGMGGMM) has biased composition (gly residues).

This sequence belongs to the chaperonin (HSP60) family. As to quaternary structure, forms a cylinder of 14 subunits composed of two heptameric rings stacked back-to-back. Interacts with the co-chaperonin GroES.

Its subcellular location is the cytoplasm. The catalysed reaction is ATP + H2O + a folded polypeptide = ADP + phosphate + an unfolded polypeptide.. Functionally, together with its co-chaperonin GroES, plays an essential role in assisting protein folding. The GroEL-GroES system forms a nano-cage that allows encapsulation of the non-native substrate proteins and provides a physical environment optimized to promote and accelerate protein folding. In Anaeromyxobacter dehalogenans (strain 2CP-C), this protein is Chaperonin GroEL 2.